A 141-amino-acid polypeptide reads, in one-letter code: Putative pre-16S rRNA nuclease (141 aa).

The protein belongs to the YqgF nuclease family.

Its subcellular location is the cytoplasm. Functionally, could be a nuclease involved in processing of the 5'-end of pre-16S rRNA. The polypeptide is Putative pre-16S rRNA nuclease (Chlorobium luteolum (strain DSM 273 / BCRC 81028 / 2530) (Pelodictyon luteolum)).